We begin with the raw amino-acid sequence, 1200 residues long: uncharacterized protein (1200 aa).

Disordered stretches follow at residues Ser282–Ser302, Leu323–Ser372, Ser392–Leu491, Arg510–Ala568, and Ser1056–Leu1200. Residues Ala420–Ser435 are compositionally biased toward low complexity. Residues Thr437–Gly448 are compositionally biased toward basic and acidic residues. Residues Gly518–Pro527 show a composition bias toward polar residues. Residues Glu1137–Leu1153 show a composition bias toward basic and acidic residues. Low complexity predominate over residues Arg1160–Arg1171. The segment covering Gly1175 to Leu1200 has biased composition (polar residues).

This is an uncharacterized protein from Homo sapiens (Human).